Consider the following 327-residue polypeptide: Methionyl-tRNA formyltransferase (327 aa).

121 to 124 provides a ligand contact to (6S)-5,6,7,8-tetrahydrofolate; sequence SLLP.

It belongs to the Fmt family.

The catalysed reaction is L-methionyl-tRNA(fMet) + (6R)-10-formyltetrahydrofolate = N-formyl-L-methionyl-tRNA(fMet) + (6S)-5,6,7,8-tetrahydrofolate + H(+). Attaches a formyl group to the free amino group of methionyl-tRNA(fMet). The formyl group appears to play a dual role in the initiator identity of N-formylmethionyl-tRNA by promoting its recognition by IF2 and preventing the misappropriation of this tRNA by the elongation apparatus. This chain is Methionyl-tRNA formyltransferase, found in Burkholderia mallei (strain ATCC 23344).